The sequence spans 509 residues: Maturase K (509 aa).

This sequence belongs to the intron maturase 2 family. MatK subfamily.

It is found in the plastid. It localises to the chloroplast. Usually encoded in the trnK tRNA gene intron. Probably assists in splicing its own and other chloroplast group II introns. The polypeptide is Maturase K (Stylosanthes hamata (Caribbean stylo)).